The primary structure comprises 539 residues: Chaperonin GroEL (539 aa).

ATP is bound by residues 29–32 (TLGP), 86–90 (DGTTT), G413, 476–478 (NAA), and D492.

The protein belongs to the chaperonin (HSP60) family. As to quaternary structure, forms a cylinder of 14 subunits composed of two heptameric rings stacked back-to-back. Interacts with the co-chaperonin GroES.

Its subcellular location is the cytoplasm. It carries out the reaction ATP + H2O + a folded polypeptide = ADP + phosphate + an unfolded polypeptide.. Its function is as follows. Together with its co-chaperonin GroES, plays an essential role in assisting protein folding. The GroEL-GroES system forms a nano-cage that allows encapsulation of the non-native substrate proteins and provides a physical environment optimized to promote and accelerate protein folding. The chain is Chaperonin GroEL from Parageobacillus thermoglucosidasius (Geobacillus thermoglucosidasius).